We begin with the raw amino-acid sequence, 167 residues long: Crossover junction endodeoxyribonuclease RuvC (167 aa).

Catalysis depends on residues Asp11, Glu71, and Asp143. Residues Asp11, Glu71, and Asp143 each contribute to the Mg(2+) site.

It belongs to the RuvC family. In terms of assembly, homodimer which binds Holliday junction (HJ) DNA. The HJ becomes 2-fold symmetrical on binding to RuvC with unstacked arms; it has a different conformation from HJ DNA in complex with RuvA. In the full resolvosome a probable DNA-RuvA(4)-RuvB(12)-RuvC(2) complex forms which resolves the HJ. The cofactor is Mg(2+).

It is found in the cytoplasm. The catalysed reaction is Endonucleolytic cleavage at a junction such as a reciprocal single-stranded crossover between two homologous DNA duplexes (Holliday junction).. The RuvA-RuvB-RuvC complex processes Holliday junction (HJ) DNA during genetic recombination and DNA repair. Endonuclease that resolves HJ intermediates. Cleaves cruciform DNA by making single-stranded nicks across the HJ at symmetrical positions within the homologous arms, yielding a 5'-phosphate and a 3'-hydroxyl group; requires a central core of homology in the junction. The consensus cleavage sequence is 5'-(A/T)TT(C/G)-3'. Cleavage occurs on the 3'-side of the TT dinucleotide at the point of strand exchange. HJ branch migration catalyzed by RuvA-RuvB allows RuvC to scan DNA until it finds its consensus sequence, where it cleaves and resolves the cruciform DNA. The sequence is that of Crossover junction endodeoxyribonuclease RuvC from Bartonella bacilliformis (strain ATCC 35685 / KC583 / Herrer 020/F12,63).